Consider the following 616-residue polypeptide: Protein RIK (616 aa).

The segment covering 1-11 (MTEDRAHKVAD) has biased composition (basic and acidic residues). Residues 1–32 (MTEDRAHKVADEPAASGRQSPERKKRKWDQPA) are disordered. The KH domain occupies 198–304 (GTTSESISVP…AKVLAENLLD (107 aa)). 3 stretches are compositionally biased toward polar residues: residues 432–449 (TQAV…TKGN), 475–484 (TESQNSQQGS), and 491–502 (LDSSGNIGSSSI). 2 disordered regions span residues 432-455 (TQAV…LDAE) and 467-616 (LPVS…HTCV). Residues 534–564 (LPPPLKSMLPLPPRSMPPPPPKSMPPPPPKF) show a composition bias toward pro residues. 2 stretches are compositionally biased toward basic and acidic residues: residues 565-575 (PSDEFLSRNEN) and 598-610 (SERR…EEKN).

In terms of assembly, interacts with RS2. Expressed in vegetative tissues. More abundant in apices and young leaf primordia than in fully expanded leaf tissues.

Its subcellular location is the nucleus. The sequence is that of Protein RIK from Zea mays (Maize).